The chain runs to 583 residues: Potassium-transporting ATPase potassium-binding subunit (583 aa).

A run of 10 helical transmembrane segments spans residues Asn3 to Gly23, Met66 to Ala86, Gly135 to Ile155, Val177 to Val197, Leu266 to Ile286, Val293 to Ala313, Gly402 to Gly422, Ala440 to Leu460, Val506 to Met526, and Leu549 to Ala569.

This sequence belongs to the KdpA family. As to quaternary structure, the system is composed of three essential subunits: KdpA, KdpB and KdpC.

Its subcellular location is the cell inner membrane. Functionally, part of the high-affinity ATP-driven potassium transport (or Kdp) system, which catalyzes the hydrolysis of ATP coupled with the electrogenic transport of potassium into the cytoplasm. This subunit binds the periplasmic potassium ions and delivers the ions to the membrane domain of KdpB through an intramembrane tunnel. The chain is Potassium-transporting ATPase potassium-binding subunit from Desulfovibrio desulfuricans (strain ATCC 27774 / DSM 6949 / MB).